Consider the following 170-residue polypeptide: ATP synthase subunit b, chloroplastic (170 aa).

The chain crosses the membrane as a helical span at residues 15 to 35 (ILETNVINLAVVVGVVVFFVG).

This sequence belongs to the ATPase B chain family. As to quaternary structure, F-type ATPases have 2 components, F(1) - the catalytic core - and F(0) - the membrane proton channel. F(1) has five subunits: alpha(3), beta(3), gamma(1), delta(1), epsilon(1). F(0) has four main subunits: a(1), b(1), b'(1) and c(10-14). The alpha and beta chains form an alternating ring which encloses part of the gamma chain. F(1) is attached to F(0) by a central stalk formed by the gamma and epsilon chains, while a peripheral stalk is formed by the delta, b and b' chains.

The protein resides in the plastid. It is found in the chloroplast thylakoid membrane. F(1)F(0) ATP synthase produces ATP from ADP in the presence of a proton or sodium gradient. F-type ATPases consist of two structural domains, F(1) containing the extramembraneous catalytic core and F(0) containing the membrane proton channel, linked together by a central stalk and a peripheral stalk. During catalysis, ATP synthesis in the catalytic domain of F(1) is coupled via a rotary mechanism of the central stalk subunits to proton translocation. In terms of biological role, component of the F(0) channel, it forms part of the peripheral stalk, linking F(1) to F(0). The polypeptide is ATP synthase subunit b, chloroplastic (Stigeoclonium helveticum (Green alga)).